A 283-amino-acid chain; its full sequence is Pantothenate synthetase (283 aa).

ATP is bound at residue 30 to 37 (MGYFHDGH). His37 functions as the Proton donor in the catalytic mechanism. Gln61 serves as a coordination point for (R)-pantoate. Beta-alanine is bound at residue Gln61. 147–150 (GSKD) is an ATP binding site. Position 153 (Gln153) interacts with (R)-pantoate. ATP contacts are provided by residues Val176 and 184–187 (MSSR).

It belongs to the pantothenate synthetase family. In terms of assembly, homodimer.

It is found in the cytoplasm. It catalyses the reaction (R)-pantoate + beta-alanine + ATP = (R)-pantothenate + AMP + diphosphate + H(+). It functions in the pathway cofactor biosynthesis; (R)-pantothenate biosynthesis; (R)-pantothenate from (R)-pantoate and beta-alanine: step 1/1. Catalyzes the condensation of pantoate with beta-alanine in an ATP-dependent reaction via a pantoyl-adenylate intermediate. This is Pantothenate synthetase from Desulforapulum autotrophicum (strain ATCC 43914 / DSM 3382 / VKM B-1955 / HRM2) (Desulfobacterium autotrophicum).